A 418-amino-acid chain; its full sequence is Histidinol dehydrogenase (418 aa).

Residues tyrosine 119, glutamine 180, and asparagine 203 each coordinate NAD(+). Substrate-binding residues include threonine 226, glutamine 248, and histidine 251. Residues glutamine 248 and histidine 251 each contribute to the Zn(2+) site. Residues glutamate 316 and histidine 317 each act as proton acceptor in the active site. Substrate is bound by residues histidine 317, aspartate 350, glutamate 404, and histidine 409. Residue aspartate 350 participates in Zn(2+) binding. Position 409 (histidine 409) interacts with Zn(2+).

This sequence belongs to the histidinol dehydrogenase family. Requires Zn(2+) as cofactor.

It catalyses the reaction L-histidinol + 2 NAD(+) + H2O = L-histidine + 2 NADH + 3 H(+). Its pathway is amino-acid biosynthesis; L-histidine biosynthesis; L-histidine from 5-phospho-alpha-D-ribose 1-diphosphate: step 9/9. Its function is as follows. Catalyzes the sequential NAD-dependent oxidations of L-histidinol to L-histidinaldehyde and then to L-histidine. The chain is Histidinol dehydrogenase from Staphylococcus aureus (strain COL).